The chain runs to 445 residues: Na(+)-translocating NADH-quinone reductase subunit A (445 aa).

This sequence belongs to the NqrA family. As to quaternary structure, composed of six subunits; NqrA, NqrB, NqrC, NqrD, NqrE and NqrF.

The catalysed reaction is a ubiquinone + n Na(+)(in) + NADH + H(+) = a ubiquinol + n Na(+)(out) + NAD(+). In terms of biological role, NQR complex catalyzes the reduction of ubiquinone-1 to ubiquinol by two successive reactions, coupled with the transport of Na(+) ions from the cytoplasm to the periplasm. NqrA to NqrE are probably involved in the second step, the conversion of ubisemiquinone to ubiquinol. The chain is Na(+)-translocating NADH-quinone reductase subunit A from Pseudomonas aeruginosa (strain ATCC 15692 / DSM 22644 / CIP 104116 / JCM 14847 / LMG 12228 / 1C / PRS 101 / PAO1).